Reading from the N-terminus, the 556-residue chain is Formate--tetrahydrofolate ligase (556 aa).

65–72 lines the ATP pocket; the sequence is TPAGEGKS.

It belongs to the formate--tetrahydrofolate ligase family.

The catalysed reaction is (6S)-5,6,7,8-tetrahydrofolate + formate + ATP = (6R)-10-formyltetrahydrofolate + ADP + phosphate. Its pathway is one-carbon metabolism; tetrahydrofolate interconversion. In Clostridium perfringens (strain ATCC 13124 / DSM 756 / JCM 1290 / NCIMB 6125 / NCTC 8237 / Type A), this protein is Formate--tetrahydrofolate ligase.